A 33-amino-acid polypeptide reads, in one-letter code: Ice-structuring protein SS-3 (33 aa).

This sequence belongs to the type-I AFP family.

Antifreeze proteins lower the blood freezing point. The sequence is that of Ice-structuring protein SS-3 from Myoxocephalus scorpius (Shorthorn sculpin).